The sequence spans 512 residues: Solute carrier family 40 member 2 (512 aa).

The tract at residues 1–28 is disordered; the sequence is MEEETETRVFLSNEQHQEEEEEEEEEPS. Residues 17 to 27 are compositionally biased toward acidic residues; the sequence is QEEEEEEEEEP. Transmembrane regions (helical) follow at residues 55-75, 105-125, 133-153, 187-207, 214-234, 310-330, 343-363, 376-396, 405-425, 442-462, and 468-488; these read VALY…MYGV, LVTQ…LLVV, FPVF…GVLS, GIDL…ISFV, ITFA…FISV, IVLP…FGTL, YIIG…TVLY, GVWS…SIWV, MLMA…LAVI, GVQN…GIIV, and FWML…LYTI.

The protein belongs to the ferroportin (FP) (TC 2.A.100) family. SLC40A subfamily.

It localises to the vacuole membrane. Vacuolar transporter that is involved in the transport of excess nickel into the vacuole under iron deficiency, increasing cellular tolerance to nickel under iron deficiency stress response. The sequence is that of Solute carrier family 40 member 2 (IREG2) from Arabidopsis thaliana (Mouse-ear cress).